The following is a 180-amino-acid chain: High mobility group protein B1 (180 aa).

Residues 1–8 (VNFSEFSK) carry the Nuclear localization signal (NLS) 1 motif. The segment at residues 1–44 (VNFSEFSKKCSERWKTMSAKEKGKFEDMAKADKARYEREMKTYI) is a DNA-binding region (HMG box 1). Lysine 8 carries the post-translational modification N6-acetyllysine. Isoglutamyl lysine isopeptide (Lys-Gln) (interchain with Q-?) cross-links involve residues lysine 8 and lysine 9. Cysteine 10 is modified (cysteine sulfonic acid (-SO3H)). Lysine 33 participates in a covalent cross-link: Isoglutamyl lysine isopeptide (Lys-Gln) (interchain with Q-?). The interval 45-61 (PPKGETKKKFKDPNAPK) is LPS binding (Lipid A). Residues 54 to 73 (FKDPNAPKRPPSAFFLFCSE) form a cytokine-stimulating activity region. Position 55 is an N6-acetyllysine (lysine 55). Positions 60-128 (PKRPPSAFFL…KYEKDIAAYR (69 aa)) form a DNA-binding region, HMG box 2. Residue serine 65 is modified to Phosphoserine. Cysteine sulfonic acid (-SO3H) is present on cysteine 71. An N6-acetyllysine mark is found at lysine 92, lysine 93, lysine 106, lysine 137, lysine 138, lysine 142, and lysine 145. Residues 115–148 (KLKEKYEKDIAAYRAKGKPDAAKKGVVKAEKSKK) are binding to AGER/RAGE. Residues 126–144 (AYRAKGKPDAAKKGVVKAE) are compositionally biased toward basic and acidic residues. The disordered stretch occupies residues 126-180 (AYRAKGKPDAAKKGVVKAEKSKKKKEEEDDEEDEEDEEEEEEEEDEDEEEDDDDE). The short motif at 143–149 (AEKSKKK) is the Nuclear localization signal (NLS) 2 element. The segment at 143 to 149 (AEKSKKK) is NLS 2. An Isoglutamyl lysine isopeptide (Lys-Gln) (interchain with Q-?) cross-link involves residue lysine 145. Serine 146 carries the ADP-ribosylserine modification. N6-acetyllysine is present on residues lysine 147, lysine 148, lysine 149, and lysine 150. Residues lysine 147, lysine 148, and lysine 149 each participate in an isoglutamyl lysine isopeptide (Lys-Gln) (interchain with Q-?) cross-link. The segment covering 152-180 (EEDDEEDEEDEEEEEEEEDEDEEEDDDDE) has biased composition (acidic residues).

It belongs to the HMGB family. Interacts (fully reduced HMGB1) with CXCL12; probably in a 1:2 ratio involving two molecules of CXCL12, each interacting with one HMG box of HMGB1; inhibited by glycyrrhizin. Associates with the TLR4:LY96 receptor complex. Component of the RAG complex composed of core components RAG1 and RAG2, and associated component HMGB1 or HMGB2. Interacts (in cytoplasm upon starvation) with BECN1; inhibits the interaction of BECN1 and BCL2 leading to promotion of autophagy. Interacts with KPNA1; involved in nuclear import. Interacts with SREBF1, TLR2, TLR4, TLR9, PTPRZ1, APEX1, FEN1, POLB, TERT. Interacts with IL1B, AGER, MSH2, XPA, XPC, HNF1A, TP53. Interacts with CD24; the probable CD24:SIGLEC10 complex is proposed to inhibit HGMB1-mediated tissue damage immune response. Interacts with THBD; prevents HGMB1 interaction with ACER/RAGE and inhibits HGMB1 pro-inflammatory activity. Interacts with HAVCR2; impairs HMGB1 binding to B-DNA and likely HMGB1-mediated innate immune response. Interacts with XPO1; mediating nuclear export. Interacts with receptor RAGE/AGER. In terms of processing, phosphorylated at serine residues. Phosphorylation in both NLS regions is required for cytoplasmic translocation followed by secretion. Post-translationally, acetylated on multiple sites upon stimulation with LPS. Acetylation on lysine residues in the nuclear localization signals (NLS 1 and NLS 2) leads to cytoplasmic localization and subsequent secretion. Reduction/oxidation of cysteine residues and a possible intramolecular disulfide bond give rise to different redox forms with specific functional activities in various cellular compartments: 1- fully reduced HMGB1 (HMGB1C23hC45hC106h), 2-disulfide HMGB1 (HMGB1C23-C45C106h) and 3- sulfonyl HMGB1 (HMGB1C23soC45soC106so). In terms of processing, poly-ADP-ribosylated by PARP1 when secreted following stimulation with LPS. Post-translationally, in vitro cleavage by CASP1 is liberating a HMG box 1-containing peptide which may mediate immunogenic activity; the peptide antagonizes apoptosis-induced immune tolerance. Can be proteolytically cleaved by a thrombin:thrombomodulin complex; reduces binding to heparin and pro-inflammatory activities. Forms covalent cross-links mediated by transglutaminase TGM2, between a glutamine and the epsilon-amino group of a lysine residue, forming homopolymers and heteropolymers.

Its subcellular location is the nucleus. The protein resides in the chromosome. It localises to the cytoplasm. It is found in the secreted. The protein localises to the cell membrane. Its subcellular location is the endosome. The protein resides in the endoplasmic reticulum-Golgi intermediate compartment. In terms of biological role, multifunctional redox sensitive protein with various roles in different cellular compartments. In the nucleus is one of the major chromatin-associated non-histone proteins and acts as a DNA chaperone involved in replication, transcription, chromatin remodeling, V(D)J recombination, DNA repair and genome stability. Proposed to be an universal biosensor for nucleic acids. Promotes host inflammatory response to sterile and infectious signals and is involved in the coordination and integration of innate and adaptive immune responses. In the cytoplasm functions as a sensor and/or chaperone for immunogenic nucleic acids implicating the activation of TLR9-mediated immune responses, and mediates autophagy. Acts as a danger-associated molecular pattern (DAMP) molecule that amplifies immune responses during tissue injury. Released to the extracellular environment can bind DNA, nucleosomes, IL-1 beta, CXCL12, AGER isoform 2/sRAGE, lipopolysaccharide (LPS) and lipoteichoic acid (LTA), and activates cells through engagement of multiple surface receptors. In the extracellular compartment fully reduced HMGB1 (released by necrosis) acts as a chemokine, disulfide HMGB1 (actively secreted) as a cytokine, and sulfonyl HMGB1 (released from apoptotic cells) promotes immunological tolerance. Has proangiogenic activity. May be involved in platelet activation. Binds to phosphatidylserine and phosphatidylethanolamide. Bound to RAGE mediates signaling for neuronal outgrowth. May play a role in accumulation of expanded polyglutamine (polyQ) proteins. Nuclear functions are attributed to fully reduced HGMB1. Associates with chromatin and binds DNA with a preference to non-canonical DNA structures such as single-stranded DNA, DNA-containing cruciforms or bent structures, supercoiled DNA and ZDNA. Can bent DNA and enhance DNA flexibility by looping thus providing a mechanism to promote activities on various gene promoters by enhancing transcription factor binding and/or bringing distant regulatory sequences into close proximity. May be involved in nucleotide excision repair (NER), mismatch repair (MMR) and base excision repair (BER) pathways, and double strand break repair such as non-homologous end joining (NHEJ). Involved in V(D)J recombination by acting as a cofactor of the RAG complex: acts by stimulating cleavage and RAG protein binding at the 23 bp spacer of conserved recombination signal sequences (RSS). In vitro can displace histone H1 from highly bent DNA. Can restructure the canonical nucleosome leading to relaxation of structural constraints for transcription factor-binding. Enhances binding of sterol regulatory element-binding proteins (SREBPs) such as SREBF1 to their cognate DNA sequences and increases their transcriptional activities. Facilitates binding of TP53 to DNA. May be involved in mitochondrial quality control and autophagy in a transcription-dependent fashion implicating HSPB1. Can modulate the activity of the telomerase complex and may be involved in telomere maintenance. Its function is as follows. In the cytoplasm proposed to dissociate the BECN1:BCL2 complex via competitive interaction with BECN1 leading to autophagy activation. Can protect BECN1 and ATG5 from calpain-mediated cleavage and thus proposed to control their proautophagic and proapoptotic functions and to regulate the extent and severity of inflammation-associated cellular injury. In myeloid cells has a protective role against endotoxemia and bacterial infection by promoting autophagy. Involved in endosomal translocation and activation of TLR9 in response to CpG-DNA in macrophages. Functionally, in the extracellular compartment (following either active secretion or passive release) involved in regulation of the inflammatory response. Fully reduced HGMB1 (which subsequently gets oxidized after release) in association with CXCL12 mediates the recruitment of inflammatory cells during the initial phase of tissue injury; the CXCL12:HMGB1 complex triggers CXCR4 homodimerization. Induces the migration of monocyte-derived immature dendritic cells and seems to regulate adhesive and migratory functions of neutrophils implicating AGER/RAGE and ITGAM. Can bind to various types of DNA and RNA including microbial unmethylated CpG-DNA to enhance the innate immune response to nucleic acids. Proposed to act in promiscuous DNA/RNA sensing which cooperates with subsequent discriminative sensing by specific pattern recognition receptors. Promotes extracellular DNA-induced AIM2 inflammasome activation implicating AGER/RAGE. Disulfide HMGB1 binds to transmembrane receptors, such as AGER/RAGE, TLR2, TLR4 and probably TREM1, thus activating their signal transduction pathways. Mediates the release of cytokines/chemokines such as TNF, IL-1, IL-6, IL-8, CCL2, CCL3, CCL4 and CXCL10. Promotes secretion of interferon-gamma by macrophage-stimulated natural killer (NK) cells in concert with other cytokines like IL-2 or IL-12. TLR4 is proposed to be the primary receptor promoting macrophage activation and signaling through TLR4 seems to implicate LY96/MD-2. In bacterial LPS- or LTA-mediated inflammatory responses binds to the endotoxins and transfers them to CD14 for signaling to the respective TLR4:LY96 and TLR2 complexes. Contributes to tumor proliferation by association with ACER/RAGE. Can bind to IL1-beta and signals through the IL1R1:IL1RAP receptor complex. Binding to class A CpG activates cytokine production in plasmacytoid dendritic cells implicating TLR9, MYD88 and AGER/RAGE and can activate autoreactive B cells. Via HMGB1-containing chromatin immune complexes may also promote B cell responses to endogenous TLR9 ligands through a B-cell receptor (BCR)-dependent and ACER/RAGE-independent mechanism. Inhibits phagocytosis of apoptotic cells by macrophages; the function is dependent on poly-ADP-ribosylation and involves binding to phosphatidylserine on the cell surface of apoptotic cells. In adaptive immunity may be involved in enhancing immunity through activation of effector T-cells and suppression of regulatory T (TReg) cells. In contrast, without implicating effector or regulatory T-cells, required for tumor infiltration and activation of T-cells expressing the lymphotoxin LTA:LTB heterotrimer thus promoting tumor malignant progression. Also reported to limit proliferation of T-cells. Released HMGB1:nucleosome complexes formed during apoptosis can signal through TLR2 to induce cytokine production. Involved in induction of immunological tolerance by apoptotic cells; its pro-inflammatory activities when released by apoptotic cells are neutralized by reactive oxygen species (ROS)-dependent oxidation specifically on Cys-106. During macrophage activation by activated lymphocyte-derived self apoptotic DNA (ALD-DNA) promotes recruitment of ALD-DNA to endosomes. The chain is High mobility group protein B1 (HMGB1) from Cricetulus griseus (Chinese hamster).